The chain runs to 522 residues: MAFLDNPTIILAHIRQSHVTSDDTGMCEMVLIDHDVDLEKTHPPSVPGDSGSEVQGSSGETQGYIYAQSVDITSSWDFGIRRRSNTAQRLERLRKERQNQIKCKNIQWKERNSKQSAQELKSLFEKKSLKEKPPSSGKQSILSVRLEQCPLQLNNPFNEYSKFDGKGHVGTTATKKIDVYLPLHSSQDRLLPMTVVTMASARVQDLIGLICWQYTSEGREPKLNDNVSAYCLHIAEDDGEVDTDFPPLDSNEPIHKFGFSTLALVEKYSSPGLTSKESLFVRINAAHGFSLIQVDNTKVTMKEILLKALKRRKGSQKISGPQYRLEKQSEPNIGVDLESTLESQNAWEFCLVRENSSRADGVFEEDSQIDIATVQDMLSSHHYKSFKVSMIHRLRFTTDVQLGISGDKVEIDPVTNQKASTKFWIKQKPISIDCDLLCACDLAEEKSPSHAVFKLTYLSSHDYKHLYFESDAATVSEIVLKVNYILESRASTARADYFAQKQRKLNRRTSFSFQKEKKSGQQ.

Ala2 bears the N-acetylalanine mark. The interval 2–184 is interaction with MAP3K2; it reads AFLDNPTIIL…KKIDVYLPLH (183 aa). Residues 2–267 are interaction with NBN; sequence AFLDNPTIIL…GFSTLALVEK (266 aa). A disordered region spans residues 38–59; that stretch reads LEKTHPPSVPGDSGSEVQGSSG. Thr86 bears the Phosphothreonine mark. Ser128, Ser186, Ser315, and Ser356 each carry phosphoserine. Positions 139–267 constitute a CRIM domain; sequence QSILSVRLEQ…GFSTLALVEK (129 aa). Residues 279–353 form an SIN1-type RBD region; sequence LFVRINAAHG…QNAWEFCLVR (75 aa). In terms of domain architecture, SIN1-type PH spans 382 to 487; the sequence is HYKSFKVSMI…IVLKVNYILE (106 aa). Residue Arg393 participates in a 1,2-diacyl-sn-glycero-3-phospho-(1D-myo-inositol-3,4,5-trisphosphate) binding. Position 398 is a phosphothreonine (Thr398). Positions 428 and 464 each coordinate a 1,2-diacyl-sn-glycero-3-phospho-(1D-myo-inositol-3,4,5-trisphosphate). The segment at 468-522 is interaction with ATF2; it reads FESDAATVSEIVLKVNYILESRASTARADYFAQKQRKLNRRTSFSFQKEKKSGQQ. At Ser510 the chain carries Phosphoserine.

Belongs to the SIN1 family. As to quaternary structure, component of the mechanistic target of rapamycin complex 2 (mTORC2), consisting in two heterotretramers composed of MTOR, MLST8, RICTOR and MAPKAP1/SIN1. The mTORC2 core complex associates with PRR5/PROTOR1 and/or PRR5L/PROTOR2. Contrary to mTORC1, mTORC2 does not bind to and is not sensitive to FKBP12-rapamycin. Interacts with MAP3K2. Interacts with ATF2. Interacts with MAPK8. Interacts with GTP-bound HRAS and KRAS; inhibiting their activity. Interacts with IFNAR2. Phosphorylation at Ser-128 by PKC promotes relocalization to the perinuclear region, where the mTORC2 complex specifically mediates phosphorylation of SGK1. Phosphorylated at Thr-86 by AKT1 or RPS6KB1 in the presence of growth factors; the effect of this phosphorylation is however unclear. According to two studies, phosphorylation at Thr-86 by AKT1 is part of a positive feedback loop that increases mTORC2 activation. According to another study, phosphorylation at Thr-86 and Thr-398 by RPS6KB1 promotes dissociation from the mTORC2 complex, leading to inhibit mTORC2 signaling.

It is found in the cell membrane. The protein resides in the endoplasmic reticulum membrane. It localises to the early endosome membrane. The protein localises to the late endosome membrane. Its subcellular location is the lysosome membrane. It is found in the golgi apparatus membrane. The protein resides in the mitochondrion outer membrane. It localises to the cytoplasm. The protein localises to the perinuclear region. Its subcellular location is the nucleus. Its activity is regulated as follows. Phosphatidylinositol 3,4,5-trisphosphate (PI(3,4,5)P3) promotes MTOR activation by relieving MAPKAP1/SIN1-mediated inhibition of MTOR that takes place in absence of PI(3,4,5)P3. Component of the mechanistic target of rapamycin complex 2 (mTORC2), which transduces signals from growth factors to pathways involved in proliferation, cytoskeletal organization, lipogenesis and anabolic output. In response to growth factors, mTORC2 phosphorylates and activates AGC protein kinase family members, including AKT (AKT1, AKT2 and AKT3), PKC (PRKCA, PRKCB and PRKCE) and SGK1. In contrast to mTORC1, mTORC2 is nutrient-insensitive. Within the mTORC2 complex, MAPKAP1/SIN1 acts as a substrate adapter which recognizes and binds AGC protein kinase family members for phosphorylation by MTOR. mTORC2 plays a critical role in AKT1 activation by mediating phosphorylation of different sites depending on the context, such as 'Thr-450', 'Ser-473', 'Ser-477' or 'Thr-479', facilitating the phosphorylation of the activation loop of AKT1 on 'Thr-308' by PDPK1/PDK1 which is a prerequisite for full activation. mTORC2 catalyzes the phosphorylation of SGK1 at 'Ser-422' and of PRKCA on 'Ser-657'. The mTORC2 complex also phosphorylates various proteins involved in insulin signaling, such as FBXW8 and IGF2BP1. mTORC2 acts upstream of Rho GTPases to regulate the actin cytoskeleton, probably by activating one or more Rho-type guanine nucleotide exchange factors. mTORC2 promotes the serum-induced formation of stress-fibers or F-actin. MAPKAP1 inhibits MAP3K2 by preventing its dimerization and autophosphorylation. Inhibits HRAS and KRAS independently of mTORC2 complex. Enhances osmotic stress-induced phosphorylation of ATF2 and ATF2-mediated transcription. Involved in ciliogenesis, regulates cilia length through its interaction with CCDC28B independently of mTORC2 complex. The protein is Target of rapamycin complex 2 subunit MAPKAP1 of Rattus norvegicus (Rat).